A 160-amino-acid polypeptide reads, in one-letter code: SsrA-binding protein (160 aa).

This sequence belongs to the SmpB family.

It is found in the cytoplasm. Functionally, required for rescue of stalled ribosomes mediated by trans-translation. Binds to transfer-messenger RNA (tmRNA), required for stable association of tmRNA with ribosomes. tmRNA and SmpB together mimic tRNA shape, replacing the anticodon stem-loop with SmpB. tmRNA is encoded by the ssrA gene; the 2 termini fold to resemble tRNA(Ala) and it encodes a 'tag peptide', a short internal open reading frame. During trans-translation Ala-aminoacylated tmRNA acts like a tRNA, entering the A-site of stalled ribosomes, displacing the stalled mRNA. The ribosome then switches to translate the ORF on the tmRNA; the nascent peptide is terminated with the 'tag peptide' encoded by the tmRNA and targeted for degradation. The ribosome is freed to recommence translation, which seems to be the essential function of trans-translation. This chain is SsrA-binding protein, found in Haemophilus ducreyi (strain 35000HP / ATCC 700724).